A 144-amino-acid polypeptide reads, in one-letter code: NADH-ubiquinone oxidoreductase chain 6 (144 aa).

The next 5 helical transmembrane spans lie at 1–21 (MVKVFFVLAVLSSIISYINID), 25–45 (SSFFLIFSLLFSMPVISMSMH), 46–66 (IWFSYFICLLFLSGIFVILVY), 79–99 (YMAVFLLLLSMLYFSPTVLTY), and 108–128 (FYYSIYWFIFCFILVCLLFFM).

It belongs to the complex I subunit 6 family.

It is found in the mitochondrion membrane. The catalysed reaction is a ubiquinone + NADH + 5 H(+)(in) = a ubiquinol + NAD(+) + 4 H(+)(out). In terms of biological role, core subunit of the mitochondrial membrane respiratory chain NADH dehydrogenase (Complex I) that is believed to belong to the minimal assembly required for catalysis. Complex I functions in the transfer of electrons from NADH to the respiratory chain. The immediate electron acceptor for the enzyme is believed to be ubiquinone. This is NADH-ubiquinone oxidoreductase chain 6 from Caenorhabditis elegans.